The chain runs to 398 residues: Cystathionine gamma-lyase (398 aa).

Serine 50 is modified (phosphoserine). Substrate contacts are provided by arginine 61, tyrosine 113, and arginine 118. Position 211 is an N6-(pyridoxal phosphate)lysine (lysine 211). Residue glutamate 338 coordinates substrate.

This sequence belongs to the trans-sulfuration enzymes family. As to quaternary structure, homotetramer. Interacts with CALM in a calcium-dependent manner. Pyridoxal 5'-phosphate serves as cofactor.

It is found in the cytoplasm. It catalyses the reaction L,L-cystathionine + H2O = 2-oxobutanoate + L-cysteine + NH4(+). The catalysed reaction is L-homoserine = 2-oxobutanoate + NH4(+). The enzyme catalyses L-selenocystathionine + H2O = L-selenocysteine + 2-oxobutanoate + NH4(+). It carries out the reaction L-cysteine + H2O = hydrogen sulfide + pyruvate + NH4(+) + H(+). It catalyses the reaction L-homocysteine + H2O = 2-oxobutanoate + hydrogen sulfide + NH4(+) + H(+). It participates in amino-acid biosynthesis; L-cysteine biosynthesis; L-cysteine from L-homocysteine and L-serine: step 2/2. In terms of biological role, catalyzes the last step in the trans-sulfuration pathway from L-methionine to L-cysteine in a pyridoxal-5'-phosphate (PLP)-dependent manner, which consists on cleaving the L,L-cystathionine molecule into L-cysteine, ammonia and 2-oxobutanoate. Part of the L-cysteine derived from the trans-sulfuration pathway is utilized for biosynthesis of the ubiquitous antioxidant glutathione. Besides its role in the conversion of L-cystathionine into L-cysteine, it utilizes L-cysteine and L-homocysteine as substrates (at much lower rates than L,L-cystathionine) to produce hydrogen sulfide (H2S). In vitro, it converts two L-cysteine molecules into lanthionine and H2S, and two L-homocysteine molecules to homolanthionine and H2S, which can be particularly relevant under conditions of severe hyperhomocysteinemia. Lanthionine and homolanthionine are structural homologs of L,L-cystathionine that differ by the absence or presence of an extra methylene group, respectively. Acts as a cysteine-protein sulfhydrase by mediating sulfhydration of target proteins: sulfhydration consists of converting -SH groups into -SSH on specific cysteine residues of target proteins such as GAPDH, PTPN1 and NF-kappa-B subunit RELA, thereby regulating their function. By generating the gasotransmitter H2S, it participates in a number of physiological processes such as vasodilation, bone protection, and inflammation. Plays an essential role in myogenesis by contributing to the biogenesis of H2S in skeletal muscle tissue. Can also accept homoserine as substrate. Catalyzes the elimination of selenocystathionine (which can be derived from the diet) to yield selenocysteine, ammonia and 2-oxobutanoate. In Rattus norvegicus (Rat), this protein is Cystathionine gamma-lyase (Cth).